A 670-amino-acid chain; its full sequence is Cyclic di-GMP phosphodiesterase PdeA (670 aa).

One can recognise an EAL domain in the interval 428-670; the sequence is QNKIFQYILK…GFLWHKPEPI (243 aa).

The catalysed reaction is 3',3'-c-di-GMP + H2O = 5'-phosphoguanylyl(3'-&gt;5')guanosine + H(+). Phosphodiesterase (PDE) that catalyzes the hydrolysis of cyclic diguanylate (c-di-GMP) to pGpG. This is Cyclic di-GMP phosphodiesterase PdeA from Borreliella burgdorferi (strain ATCC 35210 / DSM 4680 / CIP 102532 / B31) (Borrelia burgdorferi).